Consider the following 705-residue polypeptide: Elongation factor G (705 aa).

The tr-type G domain occupies 8–290 (ERYRNFGIMA…GVVHLLPSPA (283 aa)). Residues 17–24 (AHIDAGKT), 88–92 (DTPGH), and 142–145 (NKMD) each bind GTP. The segment at 290-309 (ADRPPVQGIDEDEKEDTRAA) is disordered.

It belongs to the TRAFAC class translation factor GTPase superfamily. Classic translation factor GTPase family. EF-G/EF-2 subfamily.

The protein resides in the cytoplasm. Functionally, catalyzes the GTP-dependent ribosomal translocation step during translation elongation. During this step, the ribosome changes from the pre-translocational (PRE) to the post-translocational (POST) state as the newly formed A-site-bound peptidyl-tRNA and P-site-bound deacylated tRNA move to the P and E sites, respectively. Catalyzes the coordinated movement of the two tRNA molecules, the mRNA and conformational changes in the ribosome. The polypeptide is Elongation factor G (Xanthomonas euvesicatoria pv. vesicatoria (strain 85-10) (Xanthomonas campestris pv. vesicatoria)).